The primary structure comprises 393 residues: NAD(P)H-quinone oxidoreductase subunit H, chloroplastic (393 aa).

This sequence belongs to the complex I 49 kDa subunit family. As to quaternary structure, NDH is composed of at least 16 different subunits, 5 of which are encoded in the nucleus.

The protein resides in the plastid. The protein localises to the chloroplast thylakoid membrane. The enzyme catalyses a plastoquinone + NADH + (n+1) H(+)(in) = a plastoquinol + NAD(+) + n H(+)(out). It catalyses the reaction a plastoquinone + NADPH + (n+1) H(+)(in) = a plastoquinol + NADP(+) + n H(+)(out). Its function is as follows. NDH shuttles electrons from NAD(P)H:plastoquinone, via FMN and iron-sulfur (Fe-S) centers, to quinones in the photosynthetic chain and possibly in a chloroplast respiratory chain. The immediate electron acceptor for the enzyme in this species is believed to be plastoquinone. Couples the redox reaction to proton translocation, and thus conserves the redox energy in a proton gradient. The chain is NAD(P)H-quinone oxidoreductase subunit H, chloroplastic from Oryza nivara (Indian wild rice).